The primary structure comprises 421 residues: Serine hydroxymethyltransferase (421 aa).

(6S)-5,6,7,8-tetrahydrofolate-binding positions include L123 and 127-129 (GHL). K232 is modified (N6-(pyridoxal phosphate)lysine).

The protein belongs to the SHMT family. Homodimer. The cofactor is pyridoxal 5'-phosphate.

It is found in the cytoplasm. The enzyme catalyses (6R)-5,10-methylene-5,6,7,8-tetrahydrofolate + glycine + H2O = (6S)-5,6,7,8-tetrahydrofolate + L-serine. Its pathway is one-carbon metabolism; tetrahydrofolate interconversion. It functions in the pathway amino-acid biosynthesis; glycine biosynthesis; glycine from L-serine: step 1/1. Functionally, catalyzes the reversible interconversion of serine and glycine with tetrahydrofolate (THF) serving as the one-carbon carrier. This reaction serves as the major source of one-carbon groups required for the biosynthesis of purines, thymidylate, methionine, and other important biomolecules. Also exhibits THF-independent aldolase activity toward beta-hydroxyamino acids, producing glycine and aldehydes, via a retro-aldol mechanism. This chain is Serine hydroxymethyltransferase, found in Ehrlichia canis (strain Jake).